A 353-amino-acid chain; its full sequence is Phosphoribosylformylglycinamidine cyclo-ligase (353 aa).

This sequence belongs to the AIR synthase family.

Its subcellular location is the cytoplasm. It carries out the reaction 2-formamido-N(1)-(5-O-phospho-beta-D-ribosyl)acetamidine + ATP = 5-amino-1-(5-phospho-beta-D-ribosyl)imidazole + ADP + phosphate + H(+). Its pathway is purine metabolism; IMP biosynthesis via de novo pathway; 5-amino-1-(5-phospho-D-ribosyl)imidazole from N(2)-formyl-N(1)-(5-phospho-D-ribosyl)glycinamide: step 2/2. The sequence is that of Phosphoribosylformylglycinamidine cyclo-ligase from Magnetococcus marinus (strain ATCC BAA-1437 / JCM 17883 / MC-1).